A 528-amino-acid chain; its full sequence is Abrin-a (528 aa).

Gln1 bears the Pyrrolidone carboxylic acid mark. Glu164 is an active-site residue. 3 disulfides stabilise this stretch: Cys247–Cys269, Cys286–Cys305, and Cys329–Cys346. A Ricin B-type lectin 1 domain is found at Tyr273–Gly400. The 1-alpha repeat unit spans residues Asp283 to Ser325. Residues Asn326–Asn366 form a 1-beta repeat. Residues Asn361 and Asn401 are each glycosylated (N-linked (GlcNAc...) asparagine). The 1-gamma repeat unit spans residues Ser369–Asn401. One can recognise a Ricin B-type lectin 2 domain in the interval Thr403–Leu527. A 2-alpha repeat occupies Ser414–Ser449. Cystine bridges form between Cys417/Cys430 and Cys456/Cys473. A 2-beta repeat occupies Thr453–Ser492. The 2-gamma repeat unit spans residues Asp495–Phe528.

It in the N-terminal section; belongs to the ribosome-inactivating protein family. Type 2 RIP subfamily. As to quaternary structure, disulfide-linked dimer of A and B chains.

It catalyses the reaction Endohydrolysis of the N-glycosidic bond at one specific adenosine on the 28S rRNA.. In terms of biological role, the A chain is responsible for inhibiting protein synthesis through the catalytic inactivation of 60S ribosomal subunits by removing adenine from position 4,324 of 28S rRNA. Abrin-a is more toxic than ricin. Its function is as follows. The B chain is a galactose-specific lectin that facilitates the binding of abrin to the cell membrane that precedes endocytosis. The protein is Abrin-a of Abrus precatorius (Indian licorice).